The sequence spans 515 residues: E3 ubiquitin-protein ligase RNF38 (515 aa).

The Bipartite nuclear localization signal 1 signature appears at 57–71 (DSPSPKRQRLSHSVF). The disordered stretch occupies residues 73-141 (YTSASPAPSP…LSRHNSISQD (69 aa)). Residues 89–104 (MTSNRQPPSVRPSQHH) are compositionally biased toward polar residues. The Bipartite nuclear localization signal 2 signature appears at 115 to 131 (RNRRSPPVRRQRGRRDR). Over residues 115 to 134 (RNRRSPPVRRQRGRRDRLSR) the composition is skewed to basic residues. The RING-type zinc finger occupies 463–504 (CVVCMCDFESRQLLRVLPCNHEFHAKCVDKWLKANRTCPICR).

Widely expressed with highest levels in testis.

It localises to the nucleus. It catalyses the reaction S-ubiquitinyl-[E2 ubiquitin-conjugating enzyme]-L-cysteine + [acceptor protein]-L-lysine = [E2 ubiquitin-conjugating enzyme]-L-cysteine + N(6)-ubiquitinyl-[acceptor protein]-L-lysine.. The protein operates within protein modification; protein ubiquitination. Functionally, acts as an E3 ubiquitin-protein ligase able to ubiquitinate p53/TP53 which promotes its relocalization to discrete foci associated with PML nuclear bodies. Exhibits preference for UBE2D2 as a E2 enzyme. The protein is E3 ubiquitin-protein ligase RNF38 of Homo sapiens (Human).